A 464-amino-acid chain; its full sequence is Probable 3-ketoacyl-CoA synthase 21 (464 aa).

A helical membrane pass occupies residues 21 to 41 (LLSSGVSVFEIFAGLLVVHLI). An FAE domain is found at 42 to 333 (YQRIRTRVKV…VIQHILCKKL (292 aa)). Residues cysteine 187, histidine 352, histidine 356, histidine 385, and asparagine 389 contribute to the active site.

This sequence belongs to the thiolase-like superfamily. Chalcone/stilbene synthases family. As to expression, expressed in flowers.

It localises to the membrane. The catalysed reaction is a very-long-chain acyl-CoA + malonyl-CoA + H(+) = a very-long-chain 3-oxoacyl-CoA + CO2 + CoA. The protein operates within lipid metabolism; fatty acid biosynthesis. The protein is Probable 3-ketoacyl-CoA synthase 21 of Arabidopsis thaliana (Mouse-ear cress).